The following is a 195-amino-acid chain: Protein M2-1 (195 aa).

Residues Met-1–Phe-28 form a C3H1-type zinc finger. Residues Pro-32–Ser-49 form an oligomerization region. A phosphoserine; by host mark is found at Ser-58 and Ser-61. A globular core region spans residues Ile-76–Ile-171. Positions Arg-126–Asn-163 are binding to the phosphoprotein. Residues Ile-172–Thr-194 are disordered.

It belongs to the pneumoviridae M2-1 protein family. Homotetramer. The homotetramer interacts with RNA. Interacts with the phosphoprotein (P); this interaction is required for protein M2-1 function, localization in host inclusion bodies. Formation of a complex host PP1/M2-1/P allows P to target host PP1 phosphatase to the M2-1 substrate. Interacts with the nucleoprotein (N). Interacts with the matrix protein (M); this interaction directs M localization to cytoplasmic inclusions comprising viral proteins L, N, P, and M2-1 and mediates M association with the nucleocapsid. Interacts with host RELA. Interacts with host PABPC1 (via C-terminus). Phosphorylated by host in infected cells. Only dephosphorylated M2-1 is competent for viral mRNA binding. Cyclic turnover of phosphorylation-dephosphorylation of M2-1 is required for efficient viral transcription.

The protein localises to the virion. It is found in the host cytoplasm. It localises to the host nucleus. Functionally, acts as a tetrameric transcription processivity factor that binds in a competitive manner to RNA and the phosphoprotein (P) to prevent premature termination during transcription. Transcription anti-terminator that enhances readthrough of intergenic junctions during viral transcription. Preferentially binds to poly(A)-rich sequences. Plays a role in the association of the matrix protein with the nucleocapsid, which initiates assembly and budding. Also, can activate host NF-kappa-B through association with host RELA. The protein is Protein M2-1 (M2-1) of Human respiratory syncytial virus B (strain B1).